Consider the following 356-residue polypeptide: MLFLAPGYIFPHVATPVTVAIDFAQAVKEGAYSFLDLKASPVPNPELFQPPSRVSIGMTGGREERNEEIIRGPLNYLLSLPGKDIRGKLIDALNEWFRVPEDKLSTIKEIIVILHTASLLIDDIQDSSQLRRGNPVAHRIFGVAQTINSANYAYFLAQAKLADLNDSRAFDIFTKGLLKLHRGQGMELYWRDNLICPTEEEYVEMVSCKTGGLFYLAVQLMQLNSEVTVNFSSFINLLGIIFQIRDDYMNLQSGTMTKTKGFSEDLTEGKFGYPIIHSIHAAPNDQQLIQILKLKTNDEVIKQYAVRYIESTGSFIYCREKLDLYLQEANETFQGLELLLGPSKGIRAILNFLRTR.

The isopentenyl diphosphate site is built by Lys-83, Arg-86, and His-115. Asp-122 and Asp-126 together coordinate Mg(2+). Residue Arg-131 participates in dimethylallyl diphosphate binding. Position 132 (Arg-132) interacts with isopentenyl diphosphate. Residues Lys-209, Thr-210, and Gln-243 each contribute to the dimethylallyl diphosphate site. Residue Asp-246 coordinates Mg(2+). Asn-250, Lys-260, and Lys-270 together coordinate dimethylallyl diphosphate.

This sequence belongs to the FPP/GGPP synthase family. Mg(2+) is required as a cofactor.

It carries out the reaction isopentenyl diphosphate + dimethylallyl diphosphate = (2E)-geranyl diphosphate + diphosphate. The catalysed reaction is isopentenyl diphosphate + (2E)-geranyl diphosphate = (2E,6E)-farnesyl diphosphate + diphosphate. It catalyses the reaction isopentenyl diphosphate + (2E,6E)-farnesyl diphosphate = (2E,6E,10E)-geranylgeranyl diphosphate + diphosphate. The protein operates within secondary metabolite biosynthesis. Geranylgeranyl pyrophosphate synthase; part of the gene cluster that mediates the biosynthesis of the indole diterpenes penitrems. The geranylgeranyl diphosphate (GGPP) synthase ptmG catalyzes the first step in penitrem biosynthesis via conversion of farnesyl pyrophosphate and isopentyl pyrophosphate into geranylgeranyl pyrophosphate (GGPP). Condensation of indole-3-glycerol phosphate with GGPP by the prenyl transferase ptmC then forms 3-geranylgeranylindole (3-GGI). Epoxidation by the FAD-dependent monooxygenase ptmM leads to a epoxidized-GGI that is substrate of the terpene cyclase ptmB for cyclization to yield paspaline. Paspaline is subsequently converted to 13-desoxypaxilline by the cytochrome P450 monooxygenase ptmP, the latter being then converted to paxilline by the cytochrome P450 monooxygenase ptmQ. Paxilline is converted to beta-paxitriol via C-10 ketoreduction by the short-chain dehydrogenase ptmH which can be monoprenylated at the C-20 by the indole diterpene prenyltransferase ptmD. A two-step elimination (acetylation and elimination) process performed by the O-acetyltransferase ptmV and ptmI leads to the production of the prenylated form of penijanthine. The FAD-linked oxidoreductase ptmO then converts the prenylated form of penijanthine into PC-M5 which is in turn transformed into PC-M4 by the aromatic dimethylallyltransferase ptmE. Five sequential oxidative transformations performed by the cytochrome P450 monooxygenases ptmK, ptmU, ptmL, ptmN and ptmJ yield the various penitrem compounds. PtmK, ptmU and ptmM are involved in the formation of the key bicyclic ring of penitrem C via the formation of the intermediates secopenitrem D and penitrem D. PtmL catalyzes the epoxidation of penitrem D and C to yield penitrem B and F, respectively. PtmJ catalyzes the last benzylic hydroxylation to convert penitrem B to prenitrem E and penitrem F to penitrem A. The polypeptide is Geranylgeranyl pyrophosphate synthase penG (Penicillium ochrochloron).